Consider the following 253-residue polypeptide: Ribosomal RNA small subunit methyltransferase A (253 aa).

S-adenosyl-L-methionine contacts are provided by His-12, Leu-14, Gly-39, Glu-60, Asp-81, and Asn-104.

This sequence belongs to the class I-like SAM-binding methyltransferase superfamily. rRNA adenine N(6)-methyltransferase family. RsmA subfamily.

Its subcellular location is the cytoplasm. It catalyses the reaction adenosine(1518)/adenosine(1519) in 16S rRNA + 4 S-adenosyl-L-methionine = N(6)-dimethyladenosine(1518)/N(6)-dimethyladenosine(1519) in 16S rRNA + 4 S-adenosyl-L-homocysteine + 4 H(+). In terms of biological role, specifically dimethylates two adjacent adenosines (A1518 and A1519) in the loop of a conserved hairpin near the 3'-end of 16S rRNA in the 30S particle. May play a critical role in biogenesis of 30S subunits. This is Ribosomal RNA small subunit methyltransferase A from Paracidovorax citrulli (strain AAC00-1) (Acidovorax citrulli).